The sequence spans 1049 residues: Solvent-resistant pump membrane transporter SrpB (1049 aa).

12 helical membrane-spanning segments follow: residues 10–30, 339–359, 366–386, 392–412, 440–460, 470–490, 542–562, 871–891, 895–915, 927–947, 973–993, and 1008–1028; these read IFAWVLAIVAMLAGALSLAKM, SVVHTIFEAVVLVFLVMYLFL, LIPTLAVPVVLLATFALLPYF, VLTMYAMVLAIGLLVDDAIVV, GALVGIGMVLSAVFVPMAFFG, FAITIVVCMGLSILVALVFTP, LAFLLITGGTGYLFTQIPKAF, APLLYALTVLIVFLCLAALYE, VPVSVIMVVPLGILGAVLATL, VGLMTTVGLSAKNAILIVEFA, ILMTSLAFTFGVLPMAIASGA, and GMITATVLAVFFVPLFYVVVV.

Belongs to the resistance-nodulation-cell division (RND) (TC 2.A.6) family.

The protein resides in the cell inner membrane. In terms of biological role, the inner membrane transporter component of an organic solvent efflux pump. Involved in export of a number of low log POW compounds including hexane (log POW 3.5), toluene (log POW 2.5) and dimethylphthalate (log POW 2.3). The solvent resistance phenotype has been postulated to depend on the operon expression level. This Pseudomonas putida (Arthrobacter siderocapsulatus) protein is Solvent-resistant pump membrane transporter SrpB (srpB).